We begin with the raw amino-acid sequence, 320 residues long: Polyprenyl transferase pyr6 (320 aa).

The next 6 helical transmembrane spans lie at 22-42, 60-80, 101-121, 127-147, 155-175, and 186-206; these read KYNC…AAAS, GLAF…NDWI, LATR…VWLM, GQNL…YPFG, LGIY…LPAW, and PDLL…TIYF. An N-linked (GlcNAc...) asparagine glycan is attached at Asn224. Residues 233 to 253 traverse the membrane as a helical segment; that stretch reads YVHGLLLLQAVAVVMVIPWIL. Asn256 carries an N-linked (GlcNAc...) asparagine glycan. The next 2 helical transmembrane spans lie at 260 to 280 and 296 to 316; these read WLWF…LYLF and FALG…VSGS.

Belongs to the UbiA prenyltransferase family. The cofactor is Mg(2+).

It is found in the membrane. It catalyses the reaction 4-hydroxy-6-(pyridin-3-yl)-2H-pyran-2-one + (2E,6E)-farnesyl diphosphate = 4-hydroxy-3-[(2E,6E)-farnesyl]-6-(pyridin-3-yl)-2H-pyran-2-one + diphosphate. Its pathway is secondary metabolite biosynthesis; terpenoid biosynthesis. In terms of biological role, polyprenyl transferase; part of the gene cluster that mediates the biosynthesis of pyripyropene A, a specific human acyl-coenzyme A:cholesterol acyltransferase 2 inhibitor. The first step of the pathway is the synthesis of nicotinyl-CoA from nicotinic acid by the nicotinic acid-CoA ligase pyr1. Nicotinyl-CoA is then a substrate of polyketide synthase pyr2 to produce 4-hydroxy-6-(3-pyridinyl)-2H-pyran-2-one (HPPO) which is further prenylated by the polyprenyl transferase pyr6 to yield farnesyl-HPPO. The next steps consist of an epoxidation of farnesyl-HPPO to epoxyfarnesyl-HPPO by FAD-dependent monooxygenase pyr5 and a cyclization of the terpenoid portion by the terpene cyclase pyr4 to yield deacetyl-pyripyropene E. The 2 cytochrome P450 monooxygenases pyr3 and pyr9, and the 2 acetyltransferases pyr7 and pyr8 are involved in the conversion of deacetyl-pyripyropene E into pyripyropene A through several cycles of oxidation and acetylation steps. Pyr7 acetylates deacetyl-pyripyropene E to pyripyropene E which is oxidized to 11-deacetyl-pyripyropene O by pyr3, which is in turn acetylated into pyripyropene O by pyr8. Pyripyropene O is then oxidized to deacetyl-pyripyropene A by pyr9. Deacetyl-pyripyropene A is finally acetylated to pyripyropene A by pyr8. The chain is Polyprenyl transferase pyr6 from Aspergillus fumigatus (strain ATCC MYA-4609 / CBS 101355 / FGSC A1100 / Af293) (Neosartorya fumigata).